Reading from the N-terminus, the 350-residue chain is Peroxidase 24 (350 aa).

A signal peptide spans Met-1 to Gly-27. 4 disulfide bridges follow: Cys-55–Cys-135, Cys-88–Cys-93, Cys-141–Cys-346, and Cys-221–Cys-253. The N-linked (GlcNAc...) asparagine glycan is linked to Asn-73. Catalysis depends on His-86, which acts as the Proton acceptor. Residues Asp-87, Val-90, Gly-92, Asp-94, and Ser-96 each contribute to the Ca(2+) site. Pro-184 contacts substrate. The N-linked (GlcNAc...) asparagine glycan is linked to Asn-189. Residue His-214 participates in heme b binding. Residue Thr-215 participates in Ca(2+) binding. N-linked (GlcNAc...) asparagine glycosylation occurs at Asn-230. Ca(2+) is bound by residues Asp-269 and Asp-277.

This sequence belongs to the peroxidase family. Classical plant (class III) peroxidase subfamily. It depends on heme b as a cofactor. Ca(2+) serves as cofactor.

Its subcellular location is the secreted. It catalyses the reaction 2 a phenolic donor + H2O2 = 2 a phenolic radical donor + 2 H2O. Functionally, removal of H(2)O(2), oxidation of toxic reductants, biosynthesis and degradation of lignin, suberization, auxin catabolism, response to environmental stresses such as wounding, pathogen attack and oxidative stress. These functions might be dependent on each isozyme/isoform in each plant tissue. This is Peroxidase 24 (PER24) from Arabidopsis thaliana (Mouse-ear cress).